A 1546-amino-acid polypeptide reads, in one-letter code: MKDSTEALNSIAFAVDTTLSSILPSSLAPPSAPPATSSFLKSIWYAFWWLWSMVVFKIMNIILLYIPSKIMNALSINFEITLNLSSILVALSAIITVCFLVVRYKYLTGYSKDTSDRKTKGKVNPSASNINLKNQSLDYVDQKKGHRRTTNYLDEFLSAIKVFGYLEKSVFHELTKNMTTQKLSHDEILYLDEKLGFSIVVEGVMQVYTRITENSNVSGGFDPDDDNELNYEKDDVLIIGNQRYQLLNEVKSGAPLSSLVSVLDLLKPVDSEDSTSDMLHSFNISDDDNISKIPEISPISLPFQGIHAGAKDDSVPPSPIIRPSKTKQLYPEIVARPKSRPHKEHTGHHLHHVHHSGATIAIIPYSAFQRVQSKYPKATSHIVTMVLARLYKVTFNTIHDYLGLTKEIMESEVKLNTTSSVRGANLPGYLFDGLLDKIYGANGINEASLSRKSDFQRASSVNLNKQKTTLCDAKSSRYVLLDSRLKSTHPGDLLSSVPLSRRSDYYQTHSHPLSADDPLVRSAFPSSKTLSSLSSPTSNLKRASSNLKFENIRDRSFSDDREETEETSLRIAVVESIFKILGISEKSTAMRNLSSFNSGRSSVSSSIVGLSNLMSADDKFDTNAARVRFDSYNGFSSTATSISRSSTPIKFYNTINQNQLHNHHMGDSVSGINISTLSRQHQANRNSSPTEFNFANVKSDFAKCLEIKSYGPNTTIVEQGSFNSGLYYVIDGSLDVLYRPSNHGEPSSNREDNLKKLYSVKSGGVAGYLSSVVGFRSLVTIRTSKKRGVIVAHISKSDYSKLMDRYYFLQLPVATKLKKLLSPQILTIDYALEWCHIPAGGVLCSQGDLANGFHIVLSGRFRVVRNKSDRYQGNTSDDDILGFSDTSMDCSPSSDINNEDLEVLGEYGHGESIGEVEVLTASRRTNSLIAVRDSETARIPRTLFEMLSLSNPSIMVKVSRIVASKVVYKDVLDQSSRNSTLIPSSTASHISNDYKTITILPTVSGLPVREFADKLVSALKAIGRNVIALDQASTLTHLGRHAFDERLAQLKLSGYFAYLEEEYETIVYICDTPLKSNWTSTCISQGDCILLLADAEDDVVATGIGDYERLLINLKTMARTDLCLLHPEKYVEPGSTSIWLKNRIWVQGHHHIEMEIIRKKDENSVKKRPNIISELASKIGSKTNPSIKSTLEDVRLKAISSFVKLNTSFVHSDRYKAVQPHKNDFLRLARILSNEAVGLVLGGGGSRGISHVGIVTALERHGIPVDLIGGTSIGSLVGGLYAKDYNIVSIYGRAKKFSKRVASLWRSVFDLTYPVTSYITGYEFNRGIWKIFGFTEIEDFWIRYFCNTTNITNSTMDIHESGYSWRFIRASMSLAGLLPPIAFQGCMLLDGGYLDNLPVSEMKKKGAKYIIAVDVGSADDRTPMNYGDTLSGFWVLFNRWNPFSKHPNVPNMMDIQMRLAYVASVNALEAAKKTNGVIYLRPPIDNYATLDFAKFDEIYHVGLNYADKLFSSWSKNGKLPAIAGMVDKAKIKSGDDKKVLYRRNSI.

Residues 1–45 (MKDSTEALNSIAFAVDTTLSSILPSSLAPPSAPPATSSFLKSIWY) are Cytoplasmic-facing. Residues 46 to 66 (AFWWLWSMVVFKIMNIILLYI) traverse the membrane as a helical segment. Over 67–81 (PSKIMNALSINFEIT) the chain is Lumenal. Residues 82-102 (LNLSSILVALSAIITVCFLVV) traverse the membrane as a helical segment. At 103 to 1546 (RYKYLTGYSK…KKVLYRRNSI (1444 aa)) the chain is on the cytoplasmic side. Residues 689-820 (PTEF…LKKL) and 816-965 (KLKK…VASK) each bind a nucleoside 3',5'-cyclic phosphate. In terms of domain architecture, PNPLA spans 1239 to 1403 (LVLGGGGSRG…LDNLPVSEMK (165 aa)). Positions 1243 to 1248 (GGGSRG) match the GXGXXG motif. Residues 1270-1274 (GTSIG) carry the GXSXG motif. Serine 1272 functions as the Nucleophile in the catalytic mechanism. Aspartate 1390 serves as the catalytic Proton acceptor. A DGA/G motif is present at residues 1390–1392 (DGG).

Belongs to the NTE family.

The protein resides in the endoplasmic reticulum membrane. The catalysed reaction is a 1-acyl-sn-glycero-3-phosphocholine + H2O = sn-glycerol 3-phosphocholine + a fatty acid + H(+). Its activity is regulated as follows. Inhibited by organophosphorus esters. Its function is as follows. Intracellular phospholipase B that catalyzes the double deacylation of phosphatidylcholine (PC) to glycerophosphocholine (GroPCho). Plays an important role in membrane lipid homeostasis. Responsible for the rapid PC turnover in response to inositol, elevated temperatures, or when choline is present in the growth medium. The protein is Lysophospholipase NTE1 (NTE1) of Scheffersomyces stipitis (strain ATCC 58785 / CBS 6054 / NBRC 10063 / NRRL Y-11545) (Yeast).